The following is a 122-amino-acid chain: Basic phospholipase A2 CbII (122 aa).

7 cysteine pairs are disulfide-bonded: Cys26–Cys115, Cys28–Cys44, Cys43–Cys95, Cys49–Cys122, Cys50–Cys88, Cys57–Cys81, and Cys75–Cys86. 3 residues coordinate Ca(2+): Tyr27, Gly29, and Gly31. His47 is a catalytic residue. Asp48 is a binding site for Ca(2+). The active site involves Asp89.

The protein belongs to the phospholipase A2 family. Group I subfamily. D49 sub-subfamily. Heterodimer of an acidic subunit (CbIalpha or CbIbeta) and a basic subunit (CbII). The acidic subunit is non-toxic, and increases the toxicity of the basic subunit. Requires Ca(2+) as cofactor. As to expression, expressed by the venom gland.

The protein localises to the secreted. It catalyses the reaction a 1,2-diacyl-sn-glycero-3-phosphocholine + H2O = a 1-acyl-sn-glycero-3-phosphocholine + a fatty acid + H(+). In terms of biological role, heterodimer: presynaptic neurotoxin. Its function is as follows. Monomer: Snake venom phospholipase A2 (PLA2) that exhibits strong anticoagulant effects by binding to factor Xa (F10) and inhibiting the prothrombinase activity (IC(50) is 20 nM). PLA2 catalyzes the calcium-dependent hydrolysis of the 2-acyl groups in 3-sn-phosphoglycerides. This Pseudocerastes fieldi (Field's horned viper) protein is Basic phospholipase A2 CbII.